We begin with the raw amino-acid sequence, 142 residues long: Putative pre-16S rRNA nuclease (142 aa).

Belongs to the YqgF nuclease family.

It is found in the cytoplasm. Its function is as follows. Could be a nuclease involved in processing of the 5'-end of pre-16S rRNA. This chain is Putative pre-16S rRNA nuclease, found in Shouchella clausii (strain KSM-K16) (Alkalihalobacillus clausii).